Consider the following 164-residue polypeptide: Nucleotide-binding protein EF_1165 (164 aa).

This sequence belongs to the YajQ family.

Functionally, nucleotide-binding protein. This chain is Nucleotide-binding protein EF_1165, found in Enterococcus faecalis (strain ATCC 700802 / V583).